The chain runs to 84 residues: Toxin Cex12 (84 aa).

Residues 1–19 (MNSLLMITTCLILVGTVWA) form the signal peptide. One can recognise an LCN-type CS-alpha/beta domain in the interval 20–83 (NDGYLFDKRK…ISRTPGKTCR (64 aa)). Disulfide bonds link Cys31-Cys82, Cys35-Cys58, Cys44-Cys63, and Cys48-Cys65.

It belongs to the long (4 C-C) scorpion toxin superfamily. Sodium channel inhibitor family. Beta subfamily. In terms of tissue distribution, expressed by the venom gland.

Its subcellular location is the secreted. Beta toxins bind voltage-independently at site-4 of sodium channels (Nav) and shift the voltage of activation toward more negative potentials thereby affecting sodium channel activation and promoting spontaneous and repetitive firing. The sequence is that of Toxin Cex12 from Centruroides exilicauda (Bark scorpion).